The chain runs to 361 residues: MNASVLGLCLSGPLVLLLAWLAPPVTSSWWYMRAAGSSRVMCDNVPGLVSRQRQLCHRHPEVMRSIGLGIAEWTAECQHQFRQHRWNCNTLDRDHSLFGRVLLRSSREAAFVYAISSAGVVFAITRACSQGELKSCSCDPKKKGSAKDSKGTFDWGGCSDNIDYGIKFARAFVDAKERKGKDARALMNLHNNRAGRKAVKRFLKQECKCHGVSGSCTLRTCWLAMADFRKTGDYLWRKYNGAIQVVMNQDGTGFTVANKRFKKPTKNDLVYFENSPDYCIKDRDAGSLGTAGRVCNLTSRGMDSCEVMCCGRGYDTARVTRMTKCECKFHWCCAVRCQDCLEALDVHTCKAPSSASEGAPT.

An N-terminal signal peptide occupies residues M1 to S27. Disulfide bonds link C77-C88, C128-C136, C138-C158, C207-C221, C209-C216, C279-C310, C295-C305, C309-C349, C325-C340, C327-C337, and C332-C333. S213 carries the O-palmitoleoyl serine; by PORCN lipid modification. An N-linked (GlcNAc...) asparagine glycan is attached at N296.

The protein belongs to the Wnt family. In terms of processing, palmitoleoylation is required for efficient binding to frizzled receptors. Depalmitoleoylation leads to Wnt signaling pathway inhibition.

The protein resides in the secreted. The protein localises to the extracellular space. It is found in the extracellular matrix. Functionally, ligand for members of the frizzled family of seven transmembrane receptors. Probable developmental protein. May be a signaling molecule which affects the development of discrete regions of tissues. Is likely to signal over only few cell diameters. In Ornithorhynchus anatinus (Duckbill platypus), this protein is Protein Wnt-2 (WNT2).